Here is a 306-residue protein sequence, read N- to C-terminus: Recombination-associated protein RdgC (306 aa).

The protein belongs to the RdgC family.

The protein resides in the cytoplasm. The protein localises to the nucleoid. In terms of biological role, may be involved in recombination. This is Recombination-associated protein RdgC from Pseudomonas syringae pv. syringae (strain B728a).